A 120-amino-acid polypeptide reads, in one-letter code: NAD(P)H-quinone oxidoreductase subunit 3, chloroplastic (120 aa).

Transmembrane regions (helical) follow at residues 7-27 (YDTF…AFSI), 64-84 (MFAL…PWAM), and 88-108 (ILGL…IVGL).

This sequence belongs to the complex I subunit 3 family. NDH is composed of at least 16 different subunits, 5 of which are encoded in the nucleus.

It is found in the plastid. The protein resides in the chloroplast thylakoid membrane. It catalyses the reaction a plastoquinone + NADH + (n+1) H(+)(in) = a plastoquinol + NAD(+) + n H(+)(out). The enzyme catalyses a plastoquinone + NADPH + (n+1) H(+)(in) = a plastoquinol + NADP(+) + n H(+)(out). In terms of biological role, NDH shuttles electrons from NAD(P)H:plastoquinone, via FMN and iron-sulfur (Fe-S) centers, to quinones in the photosynthetic chain and possibly in a chloroplast respiratory chain. The immediate electron acceptor for the enzyme in this species is believed to be plastoquinone. Couples the redox reaction to proton translocation, and thus conserves the redox energy in a proton gradient. The polypeptide is NAD(P)H-quinone oxidoreductase subunit 3, chloroplastic (Cryptomeria japonica (Japanese cedar)).